We begin with the raw amino-acid sequence, 865 residues long: Envelope glycoprotein B (865 aa).

An N-terminal signal peptide occupies residues 1 to 21; that stretch reads MHYFRRNCIFFLIVILYGTNS. At 22-731 the chain is on the virion surface side; the sequence is SPSTQNVTSR…SGVSAFMSNP (710 aa). N-linked (GlcNAc...) asparagine; by host glycosylation is present at Asn27. 5 cysteine pairs are disulfide-bonded: Cys49/Cys530, Cys66/Cys486, Cys140/Cys204, Cys298/Cys346, and Cys553/Cys590. The tract at residues 106 to 112 is involved in fusion and/or binding to host membrane; sequence TWTGTTY. Residue Asn184 is glycosylated (N-linked (GlcNAc...) asparagine; by host). The interval 191–198 is involved in fusion and/or binding to host membrane; sequence GSPWIYRT. N-linked (GlcNAc...) asparagine; by host glycans are attached at residues Asn332, Asn364, Asn406, and Asn425. Asn631 carries an N-linked (GlcNAc...) asparagine; by host glycan. Hydrophobic membrane proximal region stretches follow at residues 676 to 729 and 683 to 729; these read INKV…AFMS and DTNY…AFMS. Residues 732-752 form a helical membrane-spanning segment; it reads FGALAIGLIIIAGLVAAFLAY. The Intravirion segment spans residues 753–865; that stretch reads RYVNKLKSNP…TYSDSEDDAV (113 aa). Positions 809-812 match the Golgi targeting motif; that stretch reads YMAL. Residues 843–865 are disordered; sequence IKNSNPKYDKLPTTYSDSEDDAV. An Internalization motif motif is present at residues 850-853; it reads YDKL.

Belongs to the herpesviridae glycoprotein B family. Homotrimer; disulfide-linked. Binds to heparan sulfate proteoglycans. Interacts with gH/gL heterodimer. A proteolytic cleavage by host furin generates two subunits that remain linked by disulfide bonds.

It localises to the virion membrane. Its subcellular location is the host cell membrane. It is found in the host endosome membrane. The protein resides in the host Golgi apparatus membrane. Functionally, envelope glycoprotein that forms spikes at the surface of virion envelope. Essential for the initial attachment to heparan sulfate moieties of the host cell surface proteoglycans. Involved in fusion of viral and cellular membranes leading to virus entry into the host cell. Following initial binding to its host receptors, membrane fusion is mediated by the fusion machinery composed at least of gB and the heterodimer gH/gL. May be involved in the fusion between the virion envelope and the outer nuclear membrane during virion egress. In Gallid herpesvirus 2 (strain Chicken/Md5/ATCC VR-987) (GaHV-2), this protein is Envelope glycoprotein B.